A 200-amino-acid polypeptide reads, in one-letter code: General odorant-binding protein 70 (200 aa).

Positions 1–29 (MRRQYSMWASTVAVIACGSALMLLHPVGA) are cleaved as a signal peptide. 2 disulfides stabilise this stretch: Cys105–Cys174 and Cys152–Cys183.

Belongs to the PBP/GOBP family.

It localises to the secreted. Present in the aqueous fluid surrounding olfactory sensory dendrites and are thought to aid in the capture and transport of hydrophobic odorants into and through this fluid. The chain is General odorant-binding protein 70 (Obp70) from Anopheles gambiae (African malaria mosquito).